We begin with the raw amino-acid sequence, 1012 residues long: PHD finger protein 20 (1012 aa).

Tudor domains follow at residues histidine 4–glutamate 69 and glycine 83–arginine 147. The segment at isoleucine 142–threonine 336 is disordered. The segment covering arginine 147 to isoleucine 245 has biased composition (basic and acidic residues). Serine 159 bears the Phosphoserine mark. A DNA-binding region (a.T hook) is located at residues lysine 257 to threonine 269. Polar residues predominate over residues valine 271 to proline 280. Positions proline 297 to arginine 325 are enriched in basic and acidic residues. The C2H2-type zinc finger occupies phenylalanine 452–histidine 477. A compositionally biased stretch (basic and acidic residues) spans lysine 481 to glycine 490. The tract at residues lysine 481–aspartate 611 is disordered. Serine 488 carries the phosphoserine modification. Positions arginine 497–threonine 509 are enriched in polar residues. Over residues threonine 522–arginine 538 the composition is skewed to basic and acidic residues. Residues valine 539–threonine 551 show a composition bias toward basic residues. A PHD-type zinc finger spans residues arginine 654 to proline 700. Residue lysine 843 is modified to N6-acetyllysine. A disordered region spans residues aspartate 866 to lysine 912. Residues serine 878 and serine 880 each carry the phosphoserine modification. The span at aspartate 888 to lysine 912 shows a compositional bias: basic and acidic residues.

In terms of assembly, homodimer; disulfide-linked. Component of some MLL1/MLL complex, at least composed of the core components KMT2A/MLL1, ASH2L, HCFC1, WDR5 and RBBP5, as well as the facultative components BACC1, CHD8, E2F6, HSP70, INO80C, KANSL1, LAS1L, MAX, MCRS1, MGA, KAT8/MOF, PELP1, PHF20, PRP31, RING2, RUVB1/TIP49A, RUVB2/TIP49B, SENP3, TAF1, TAF4, TAF6, TAF7, TAF9 and TEX10. Component of the NSL complex at least composed of MOF/KAT8, KANSL1, KANSL2, KANSL3, MCRS1, PHF20, OGT1/OGT, WDR5 and HCFC1. In terms of processing, ubiquitinated by TRIM26; leading to proteasomal degradation. In terms of tissue distribution, expressed in heart, kidney, liver, lung, pancreas, placenta, spleen and testis. Not expressed in brain, skeletal muscle, colon, ovary, prostate, small intestine and thymus. Expressed in colon and ovary cancer cell lines while it is not expressed in the respective normal tissues.

It localises to the nucleus. In terms of biological role, methyllysine-binding protein, component of the MOF histone acetyltransferase protein complex. Not required for maintaining the global histone H4 'Lys-16' acetylation (H4K16ac) levels or locus specific histone acetylation, but instead works downstream in transcriptional regulation of MOF target genes. As part of the NSL complex it may be involved in acetylation of nucleosomal histone H4 on several lysine residues. Contributes to methyllysine-dependent p53/TP53 stabilization and up-regulation after DNA damage. This Homo sapiens (Human) protein is PHD finger protein 20 (PHF20).